Reading from the N-terminus, the 159-residue chain is Eukaryotic translation initiation factor 5A-1 (159 aa).

Basic and acidic residues predominate over residues 1–12 (MSDEEHHFESKA). The interval 1–23 (MSDEEHHFESKADAGASKTYPQQ) is disordered. The residue at position 52 (Lys52) is a Hypusine.

It belongs to the eIF-5A family. Post-translationally, lys-52 undergoes hypusination, a unique post-translational modification that consists in the addition of a butylamino group from spermidine to lysine side chain, leading to the formation of the unusual amino acid hypusine. eIF-5As are the only known proteins to undergo this modification, which is essential for their function.

Its function is as follows. Translation factor that promotes translation elongation and termination, particularly upon ribosome stalling at specific amino acid sequence contexts. Binds between the exit (E) and peptidyl (P) site of the ribosome and promotes rescue of stalled ribosome: specifically required for efficient translation of polyproline-containing peptides as well as other motifs that stall the ribosome. Acts as a ribosome quality control (RQC) cofactor by joining the RQC complex to facilitate peptidyl transfer during CAT tailing step. The protein is Eukaryotic translation initiation factor 5A-1 (EIF-5A1) of Nicotiana plumbaginifolia (Leadwort-leaved tobacco).